The chain runs to 655 residues: uncharacterized protein (655 aa).

The first 23 residues, 1 to 23, serve as a signal peptide directing secretion; that stretch reads MKRTIKYLSFLGLIPFLSITTIS. Cys24 carries N-palmitoyl cysteine lipidation. Cys24 carries S-diacylglycerol cysteine lipidation.

It belongs to the MG067/MG068/MG395 family.

It is found in the cell membrane. This is an uncharacterized protein from Mycoplasma capricolum subsp. capricolum (strain California kid / ATCC 27343 / NCTC 10154).